We begin with the raw amino-acid sequence, 308 residues long: Methionyl-tRNA formyltransferase (308 aa).

S109 to P112 is a binding site for (6S)-5,6,7,8-tetrahydrofolate.

Belongs to the Fmt family.

The enzyme catalyses L-methionyl-tRNA(fMet) + (6R)-10-formyltetrahydrofolate = N-formyl-L-methionyl-tRNA(fMet) + (6S)-5,6,7,8-tetrahydrofolate + H(+). Attaches a formyl group to the free amino group of methionyl-tRNA(fMet). The formyl group appears to play a dual role in the initiator identity of N-formylmethionyl-tRNA by promoting its recognition by IF2 and preventing the misappropriation of this tRNA by the elongation apparatus. This is Methionyl-tRNA formyltransferase from Rhizorhabdus wittichii (strain DSM 6014 / CCUG 31198 / JCM 15750 / NBRC 105917 / EY 4224 / RW1) (Sphingomonas wittichii).